The primary structure comprises 266 residues: Gasdermin bGSDM (266 aa).

Cys-4 carries S-palmitoyl cysteine lipidation. Beta stranded transmembrane passes span 69–85, 97–114, 163–180, and 189–205; these read INGQKTENLSFSIGINI, AGIEAQYNQARKVRFEFS, EFTVAAEKSGGGSIQLDV, and GKLKVEASVSSQSTVTY. Positions 238 to 266 are C-terminal region; sequence AMALDAAGGVMPSDSALLDEGGLLDLEGF.

The protein belongs to the bacterial gasdermin family. Monomer in solution. As to quaternary structure, homooligomer; forms homooligomeric ring-shaped pores when inserted in membranes with 48-54 subunits per ring. Post-translationally, palmitoylation helps stabilize the inactive state; may self palmitoylate. Palmitoylation plays a significant role in pore formation.

It is found in the cytoplasm. The protein resides in the cell inner membrane. Its activity is regulated as follows. The full-length protein before cleavage is inactive: intramolecular interactions between the N-terminal domain and the C-terminal region as well as the lipid modification, mediate autoinhibition. The pyroptosis-like-inducing activity is carried by the released N-terminal domain (Gasdermin bGSDM, N-terminus). Precursor of a pore-forming protein involved in defense against bacteriophages. Expression of bGSDM and the neighboring protease gene (Ga0334635_1659) is toxic in E.coli. Cleavage of this precursor by its dedicated protease releases the active moiety (gasdermin bGSDM, N-terminus) which inserts into membranes, forming pores and triggering cell death. Its function is as follows. Pore-forming protein that causes membrane permeabilization, probably via a pyroptosis-like activity. Makes ring-like pores with an interior pore diameter of 200-300 Angstroms, when integrated in liposomes. The sequence is that of Gasdermin bGSDM from Vitiosangium sp. (strain GDMCC 1.1324).